The following is a 292-amino-acid chain: 4-hydroxy-tetrahydrodipicolinate synthase (292 aa).

Pyruvate is bound at residue T45. The Proton donor/acceptor role is filled by Y133. The Schiff-base intermediate with substrate role is filled by K161. I203 contacts pyruvate.

The protein belongs to the DapA family. In terms of assembly, homotetramer; dimer of dimers.

The protein resides in the cytoplasm. The catalysed reaction is L-aspartate 4-semialdehyde + pyruvate = (2S,4S)-4-hydroxy-2,3,4,5-tetrahydrodipicolinate + H2O + H(+). Its pathway is amino-acid biosynthesis; L-lysine biosynthesis via DAP pathway; (S)-tetrahydrodipicolinate from L-aspartate: step 3/4. In terms of biological role, catalyzes the condensation of (S)-aspartate-beta-semialdehyde [(S)-ASA] and pyruvate to 4-hydroxy-tetrahydrodipicolinate (HTPA). The chain is 4-hydroxy-tetrahydrodipicolinate synthase from Cronobacter sakazakii (strain ATCC BAA-894) (Enterobacter sakazakii).